The following is a 203-amino-acid chain: NAD(P)H-quinone oxidoreductase subunit M, chloroplastic (203 aa).

The N-terminal 21 residues, 1-21 (MAASSSYMACAKFSMLGWLGG), are a transit peptide targeting the chloroplast. A compositionally biased stretch (low complexity) spans 34-48 (SPQEQAEVQESQEVN). A disordered region spans residues 34–61 (SPQEQAEVQESQEVNAQEEEKVKQPVQP).

Belongs to the NDH complex subunit M family. As to quaternary structure, part of the chloroplast NDH complex, composed of a mixture of chloroplast and nucleus encoded subunits. Component of the NDH subcomplex A, at least composed of ndhH, ndhI, ndhJ, ndhK, ndhL, ndhM, ndhN and ndhO.

The protein resides in the plastid. It is found in the chloroplast thylakoid membrane. The catalysed reaction is a plastoquinone + NADH + (n+1) H(+)(in) = a plastoquinol + NAD(+) + n H(+)(out). It catalyses the reaction a plastoquinone + NADPH + (n+1) H(+)(in) = a plastoquinol + NADP(+) + n H(+)(out). Its function is as follows. NDH shuttles electrons from NAD(P)H:plastoquinone, via FMN and iron-sulfur (Fe-S) centers, to quinones in the photosynthetic chain and possibly in a chloroplast respiratory chain. The immediate electron acceptor for the enzyme in this species is believed to be plastoquinone. Couples the redox reaction to proton translocation, and thus conserves the redox energy in a proton gradient. In Populus jackii (Balm of Gilead), this protein is NAD(P)H-quinone oxidoreductase subunit M, chloroplastic.